The sequence spans 321 residues: Glucokinase (321 aa).

8-13 (GDVGGT) contributes to the ATP binding site.

It belongs to the bacterial glucokinase family.

Its subcellular location is the cytoplasm. It carries out the reaction D-glucose + ATP = D-glucose 6-phosphate + ADP + H(+). The protein is Glucokinase of Salmonella schwarzengrund (strain CVM19633).